Here is a 354-residue protein sequence, read N- to C-terminus: Probable butyrate kinase (354 aa).

This sequence belongs to the acetokinase family.

The protein localises to the cytoplasm. The enzyme catalyses butanoate + ATP = butanoyl phosphate + ADP. This is Probable butyrate kinase from Phocaeicola vulgatus (strain ATCC 8482 / DSM 1447 / JCM 5826 / CCUG 4940 / NBRC 14291 / NCTC 11154) (Bacteroides vulgatus).